A 205-amino-acid chain; its full sequence is Probable nicotinate-nucleotide adenylyltransferase (205 aa).

It belongs to the NadD family.

The catalysed reaction is nicotinate beta-D-ribonucleotide + ATP + H(+) = deamido-NAD(+) + diphosphate. The protein operates within cofactor biosynthesis; NAD(+) biosynthesis; deamido-NAD(+) from nicotinate D-ribonucleotide: step 1/1. Catalyzes the reversible adenylation of nicotinate mononucleotide (NaMN) to nicotinic acid adenine dinucleotide (NaAD). This Nocardioides sp. (strain ATCC BAA-499 / JS614) protein is Probable nicotinate-nucleotide adenylyltransferase.